The primary structure comprises 91 residues: Uteroglobin (91 aa).

A signal peptide spans 1–21 (MKLAVTLTLVTLALCCSSASA).

Belongs to the secretoglobin family. As to quaternary structure, antiparallel homodimer; disulfide-linked. Interaction with LMBR1L has been observed in PubMed:16423471, but not in PubMed:23964685. In terms of tissue distribution, club cells (nonciliated cells of the surface epithelium of the pulmonary airways).

It localises to the secreted. In terms of biological role, binds phosphatidylcholine, phosphatidylinositol, polychlorinated biphenyls (PCB) and weakly progesterone, potent inhibitor of phospholipase A2. This Homo sapiens (Human) protein is Uteroglobin (SCGB1A1).